The sequence spans 456 residues: Na(+)-translocating NADH-quinone reductase subunit A (456 aa).

This sequence belongs to the NqrA family. In terms of assembly, composed of six subunits; NqrA, NqrB, NqrC, NqrD, NqrE and NqrF.

The catalysed reaction is a ubiquinone + n Na(+)(in) + NADH + H(+) = a ubiquinol + n Na(+)(out) + NAD(+). NQR complex catalyzes the reduction of ubiquinone-1 to ubiquinol by two successive reactions, coupled with the transport of Na(+) ions from the cytoplasm to the periplasm. NqrA to NqrE are probably involved in the second step, the conversion of ubisemiquinone to ubiquinol. This chain is Na(+)-translocating NADH-quinone reductase subunit A, found in Rhodopirellula baltica (strain DSM 10527 / NCIMB 13988 / SH1).